The following is a 740-amino-acid chain: Elongation factor 2 (740 aa).

The tr-type G domain occupies 18 to 263 (EQVRNIGIIA…MVVRWVPNPR (246 aa)). Residues 27–34 (AHVDHGKT), 93–97 (DTPGH), and 147–150 (NKVD) contribute to the GTP site. His606 carries the post-translational modification Diphthamide.

It belongs to the TRAFAC class translation factor GTPase superfamily. Classic translation factor GTPase family. EF-G/EF-2 subfamily.

It localises to the cytoplasm. Its function is as follows. Catalyzes the GTP-dependent ribosomal translocation step during translation elongation. During this step, the ribosome changes from the pre-translocational (PRE) to the post-translocational (POST) state as the newly formed A-site-bound peptidyl-tRNA and P-site-bound deacylated tRNA move to the P and E sites, respectively. Catalyzes the coordinated movement of the two tRNA molecules, the mRNA and conformational changes in the ribosome. The protein is Elongation factor 2 of Ignicoccus hospitalis (strain KIN4/I / DSM 18386 / JCM 14125).